A 109-amino-acid chain; its full sequence is UPF0102 protein Suden_1901 (109 aa).

This sequence belongs to the UPF0102 family.

The protein is UPF0102 protein Suden_1901 of Sulfurimonas denitrificans (strain ATCC 33889 / DSM 1251) (Thiomicrospira denitrificans (strain ATCC 33889 / DSM 1251)).